The following is a 717-amino-acid chain: HHIP-like protein 2 (717 aa).

The signal sequence occupies residues 1 to 40; the sequence is MLGKHTSPHTVPGHRAPWLSPGIFCLGLPFLLGWVGLLQG. 4 disulfide bridges follow: C203–C545, C207–C551, C423–C441, and C508–C607. The disordered stretch occupies residues 642 to 717; the sequence is ARKASNATFT…MRQAAGRSHP (76 aa). Over residues 646–662 the composition is skewed to polar residues; that stretch reads SNATFTSSSDRVASQKG. N647 carries N-linked (GlcNAc...) asparagine glycosylation. Over residues 672 to 687 the composition is skewed to basic residues; sequence SSKKTFRRPGTKKKSR.

It belongs to the HHIP family.

The protein localises to the secreted. In Mus musculus (Mouse), this protein is HHIP-like protein 2 (Hhipl2).